The sequence spans 126 residues: Ribonuclease P protein component (126 aa).

Belongs to the RnpA family. Consists of a catalytic RNA component (M1 or rnpB) and a protein subunit.

It catalyses the reaction Endonucleolytic cleavage of RNA, removing 5'-extranucleotides from tRNA precursor.. Its function is as follows. RNaseP catalyzes the removal of the 5'-leader sequence from pre-tRNA to produce the mature 5'-terminus. It can also cleave other RNA substrates such as 4.5S RNA. The protein component plays an auxiliary but essential role in vivo by binding to the 5'-leader sequence and broadening the substrate specificity of the ribozyme. This chain is Ribonuclease P protein component, found in Brevibacillus brevis (strain 47 / JCM 6285 / NBRC 100599).